A 141-amino-acid chain; its full sequence is Hemoglobin subunit alpha (141 aa).

One can recognise a Globin domain in the interval 1–141 (VLSPADKTNV…VSTVLTSKYR (141 aa)). Position 3 is a phosphoserine (serine 3). Position 7 is an N6-succinyllysine (lysine 7). At threonine 8 the chain carries Phosphothreonine. At lysine 11 the chain carries N6-succinyllysine. At lysine 16 the chain carries N6-acetyllysine; alternate. Lysine 16 carries the N6-succinyllysine; alternate modification. Tyrosine 24 bears the Phosphotyrosine mark. Serine 35 carries the phosphoserine modification. The residue at position 40 (lysine 40) is an N6-succinyllysine. A Phosphoserine modification is found at serine 49. Residue histidine 58 participates in O2 binding. Histidine 87 contacts heme b. Position 102 is a phosphoserine (serine 102). Threonine 108 bears the Phosphothreonine mark. Serine 124 carries the phosphoserine modification. A phosphothreonine mark is found at threonine 134 and threonine 137. Serine 138 is modified (phosphoserine).

The protein belongs to the globin family. As to quaternary structure, heterotetramer of two alpha chains and two beta chains. As to expression, red blood cells.

Functionally, involved in oxygen transport from the lung to the various peripheral tissues. Its function is as follows. Hemopressin acts as an antagonist peptide of the cannabinoid receptor CNR1. Hemopressin-binding efficiently blocks cannabinoid receptor CNR1 and subsequent signaling. The sequence is that of Hemoglobin subunit alpha (HBA) from Pteronura brasiliensis (Giant otter).